The following is a 364-amino-acid chain: RNA-binding protein 48 (364 aa).

In terms of domain architecture, RRM spans 51–129; that stretch reads RYLLVQGVPA…GQLHVCYAPE (79 aa). Positions 157 to 174 are enriched in polar residues; it reads LHSQQAEVNTESSSSTDT. 3 disordered regions span residues 157-191, 239-291, and 343-364; these read LHSQ…EARR, SLHN…ESRK, and ASVP…RRRI. The segment covering 247-262 has biased composition (low complexity); that stretch reads VQKTSTQSESSSSSGV.

The protein belongs to the RBM48 family. Component of the minor spliceosome, which splices U12-type introns.

In terms of biological role, as a component of the minor spliceosome, involved in the splicing of U12-type introns in pre-mRNAs. The sequence is that of RNA-binding protein 48 (rbm48) from Danio rerio (Zebrafish).